The sequence spans 86 residues: Large ribosomal subunit protein bL27 (86 aa).

Over residues 1–11 (MATKKAGGGSR) the composition is skewed to gly residues. The tract at residues 1–24 (MATKKAGGGSRNGRDSAGRRLGVK) is disordered.

It belongs to the bacterial ribosomal protein bL27 family.

The protein is Large ribosomal subunit protein bL27 of Rickettsia africae (strain ESF-5).